A 246-amino-acid chain; its full sequence is Isoprenyl transferase 1 (246 aa).

The active site involves aspartate 19. Position 19 (aspartate 19) interacts with Mg(2+). Substrate is bound by residues 20 to 23 (GNGR), tryptophan 24, arginine 32, histidine 36, and 64 to 66 (STD). Residue asparagine 67 is the Proton acceptor of the active site. Substrate is bound by residues tryptophan 68, arginine 70, arginine 180, and 186-188 (RLS). Glutamate 199 contributes to the Mg(2+) binding site.

The protein belongs to the UPP synthase family. Homodimer. Mg(2+) serves as cofactor.

Catalyzes the condensation of isopentenyl diphosphate (IPP) with allylic pyrophosphates generating different type of terpenoids. The chain is Isoprenyl transferase 1 from Bradyrhizobium diazoefficiens (strain JCM 10833 / BCRC 13528 / IAM 13628 / NBRC 14792 / USDA 110).